The chain runs to 198 residues: Nucleoid occlusion factor SlmA (198 aa).

The region spanning 9 to 70 (RNRREEILQA…SLIEFIEDSL (62 aa)) is the HTH tetR-type domain. Positions 33-52 (TTAKLAANVGVSEAALYRHF) form a DNA-binding region, H-T-H motif. Positions 117–144 (EQDRLQGRINQLFERIEAQLRQVLKERK) form a coiled coil.

Belongs to the nucleoid occlusion factor SlmA family. As to quaternary structure, homodimer. Interacts with FtsZ.

Its subcellular location is the cytoplasm. The protein resides in the nucleoid. Functionally, required for nucleoid occlusion (NO) phenomenon, which prevents Z-ring formation and cell division over the nucleoid. Acts as a DNA-associated cell division inhibitor that binds simultaneously chromosomal DNA and FtsZ, and disrupts the assembly of FtsZ polymers. SlmA-DNA-binding sequences (SBS) are dispersed on non-Ter regions of the chromosome, preventing FtsZ polymerization at these regions. The polypeptide is Nucleoid occlusion factor SlmA (Serratia proteamaculans (strain 568)).